A 237-amino-acid chain; its full sequence is Class B acid phosphatase (237 aa).

An N-terminal signal peptide occupies residues 1–25 (MRKLTLAFAAASLLFTLNSAVVARA). The active-site Nucleophile is the aspartate 69. Residues aspartate 69 and aspartate 71 each contribute to the Mg(2+) site. Aspartate 71 functions as the Proton donor in the catalytic mechanism. Substrate-binding positions include 137–138 (TG) and lysine 177. Residue aspartate 192 coordinates Mg(2+).

It belongs to the class B bacterial acid phosphatase family. As to quaternary structure, homotetramer. Mg(2+) serves as cofactor.

Its subcellular location is the periplasm. The enzyme catalyses a phosphate monoester + H2O = an alcohol + phosphate. Its function is as follows. Dephosphorylates several organic phosphate monoesters. Also has a phosphotransferase activity catalyzing the transfer of low-energy phosphate groups from organic phosphate monoesters to free hydroxyl groups of various organic compounds. This Klebsiella pneumoniae (strain 342) protein is Class B acid phosphatase.